The following is a 203-amino-acid chain: Holliday junction branch migration complex subunit RuvA (203 aa).

Residues 1–64 are domain I; that stretch reads MIGRLRGIII…EDAQLLYGFN (64 aa). The interval 65-142 is domain II; it reads NKQERTLFKE…KGLHGDLFTP (78 aa). A flexible linker region spans residues 143–154; the sequence is AADLVLTSPASP. Positions 155-203 are domain III; that stretch reads ATNDAEQEAVAALVALGYKPQEASRMVSKIARPDASSETLIREALRAAL.

The protein belongs to the RuvA family. Homotetramer. Forms an RuvA(8)-RuvB(12)-Holliday junction (HJ) complex. HJ DNA is sandwiched between 2 RuvA tetramers; dsDNA enters through RuvA and exits via RuvB. An RuvB hexamer assembles on each DNA strand where it exits the tetramer. Each RuvB hexamer is contacted by two RuvA subunits (via domain III) on 2 adjacent RuvB subunits; this complex drives branch migration. In the full resolvosome a probable DNA-RuvA(4)-RuvB(12)-RuvC(2) complex forms which resolves the HJ.

The protein resides in the cytoplasm. Its function is as follows. The RuvA-RuvB-RuvC complex processes Holliday junction (HJ) DNA during genetic recombination and DNA repair, while the RuvA-RuvB complex plays an important role in the rescue of blocked DNA replication forks via replication fork reversal (RFR). RuvA specifically binds to HJ cruciform DNA, conferring on it an open structure. The RuvB hexamer acts as an ATP-dependent pump, pulling dsDNA into and through the RuvAB complex. HJ branch migration allows RuvC to scan DNA until it finds its consensus sequence, where it cleaves and resolves the cruciform DNA. This chain is Holliday junction branch migration complex subunit RuvA, found in Escherichia coli O9:H4 (strain HS).